The primary structure comprises 346 residues: Beta-ketoacyl-[acyl-carrier-protein] synthase III (346 aa).

Catalysis depends on residues C120 and H256. Residues 257 to 261 (QANIR) are ACP-binding. Residue N286 is part of the active site.

This sequence belongs to the thiolase-like superfamily. FabH family. Homodimer.

The protein resides in the cytoplasm. The enzyme catalyses malonyl-[ACP] + acetyl-CoA + H(+) = 3-oxobutanoyl-[ACP] + CO2 + CoA. It participates in lipid metabolism; fatty acid biosynthesis. Functionally, catalyzes the condensation reaction of fatty acid synthesis by the addition to an acyl acceptor of two carbons from malonyl-ACP. Catalyzes the first condensation reaction which initiates fatty acid synthesis and may therefore play a role in governing the total rate of fatty acid production. Possesses both acetoacetyl-ACP synthase and acetyl transacylase activities. Its substrate specificity determines the biosynthesis of branched-chain and/or straight-chain of fatty acids. The chain is Beta-ketoacyl-[acyl-carrier-protein] synthase III from Deinococcus geothermalis (strain DSM 11300 / CIP 105573 / AG-3a).